Here is a 216-residue protein sequence, read N- to C-terminus: Thiopurine S-methyltransferase (216 aa).

Residues tryptophan 11, leucine 46, glutamate 67, and arginine 122 each contribute to the S-adenosyl-L-methionine site.

The protein belongs to the class I-like SAM-binding methyltransferase superfamily. TPMT family.

It is found in the cytoplasm. It carries out the reaction S-adenosyl-L-methionine + a thiopurine = S-adenosyl-L-homocysteine + a thiopurine S-methylether.. The protein is Thiopurine S-methyltransferase of Vibrio parahaemolyticus serotype O3:K6 (strain RIMD 2210633).